The chain runs to 122 residues: Large ribosomal subunit protein uL14 (122 aa).

This sequence belongs to the universal ribosomal protein uL14 family. Part of the 50S ribosomal subunit. Forms a cluster with proteins L3 and L19. In the 70S ribosome, L14 and L19 interact and together make contacts with the 16S rRNA in bridges B5 and B8.

In terms of biological role, binds to 23S rRNA. Forms part of two intersubunit bridges in the 70S ribosome. The protein is Large ribosomal subunit protein uL14 of Chlamydia caviae (strain ATCC VR-813 / DSM 19441 / 03DC25 / GPIC) (Chlamydophila caviae).